Here is an 870-residue protein sequence, read N- to C-terminus: Pre-mRNA-processing factor 40 homolog B (870 aa).

2 consecutive WW domains span residues 92–125 (GPPRALWSEHVAPDGRIYYYNADDKQSVWEKPSV) and 133–166 (LLSQCPWKEYKSDTGKPYYYNNQSQESRWTRPKD). The disordered stretch occupies residues 146–277 (TGKPYYYNNQ…RSGLSWSNRE (132 aa)). An N6-acetyllysine modification is found at Lys148. Lys175 is covalently cross-linked (Glycyl lysine isopeptide (Lys-Gly) (interchain with G-Cter in SUMO2)). A compositionally biased stretch (low complexity) spans 182-191 (QQTQQLQTLQ). Over residues 192–211 (PQPPQPQPDPPPIPPGPIPV) the composition is skewed to pro residues. FF domains lie at 276 to 330 (REKA…YKAQ), 340 to 397 (RLRA…VLFF), 410 to 470 (RRRN…HIRA), 490 to 550 (QRKN…YVEE), 554 to 610 (RFHD…LLEK), and 625 to 682 (RMRR…FLQV). The stretch at 604–640 (FNSLLEKAEARETEREKEEARRMRRREAAFRSMLRQA) forms a coiled coil. The disordered stretch occupies residues 690 to 870 (HLHTKGRKHG…TLLQQLDDHQ (181 aa)). Over residues 691 to 711 (LHTKGRKHGRKGKKHHRKRSH) the composition is skewed to basic residues. Composition is skewed to low complexity over residues 739–756 (SESGSEPSSSLDSVESGG) and 764–774 (SPSSHLLLGSD). Position 764 is a phosphoserine (Ser764). Basic residues predominate over residues 778–794 (RKTKKPKKKTKKRRHKS). The segment covering 804-824 (EDKAGKESEDREQEQDREPRQ) has biased composition (basic and acidic residues). Ser831 bears the Phosphoserine mark. Lys837 participates in a covalent cross-link: Glycyl lysine isopeptide (Lys-Gly) (interchain with G-Cter in SUMO2). A Phosphoserine modification is found at Ser851.

The protein belongs to the PRPF40 family. In terms of assembly, interacts with the N-terminus of HD.

The protein localises to the nucleus speckle. In terms of biological role, may be involved in pre-mRNA splicing. The chain is Pre-mRNA-processing factor 40 homolog B (Prpf40b) from Mus musculus (Mouse).